We begin with the raw amino-acid sequence, 148 residues long: Large ribosomal subunit protein uL15 (148 aa).

Residues 1-28 show a composition bias toward basic residues; it reads MIRRRKKVRKLRGSHTHGWGCKKKHRGG. Residues 1–43 form a disordered region; sequence MIRRRKKVRKLRGSHTHGWGCKKKHRGGGSKGGRGMAGTGKRK. A compositionally biased stretch (gly residues) spans 29-38; it reads GSKGGRGMAG.

The protein belongs to the universal ribosomal protein uL15 family. As to quaternary structure, part of the 50S ribosomal subunit.

Functionally, binds to the 23S rRNA. The polypeptide is Large ribosomal subunit protein uL15 (Thermococcus kodakarensis (strain ATCC BAA-918 / JCM 12380 / KOD1) (Pyrococcus kodakaraensis (strain KOD1))).